A 359-amino-acid chain; its full sequence is Tropomodulin-1 (359 aa).

Positions 36–61 (ELDPDNALLPAGLRQKDQTTKAPTGP) are disordered. The segment at 39–138 (PDNALLPAGL…CDIAAILGMH (100 aa)) is tropomyosin-binding.

The protein belongs to the tropomodulin family. Binds to the N-terminus of tropomyosin and to actin. Interacts with FLII. As to expression, highly expressed in the erythrocyte, heart and skeletal muscle.

The protein resides in the cytoplasm. It is found in the cytoskeleton. Its function is as follows. Blocks the elongation and depolymerization of the actin filaments at the pointed end. The Tmod/TM complex contributes to the formation of the short actin protofilament, which in turn defines the geometry of the membrane skeleton. This is Tropomodulin-1 (Tmod1) from Mus musculus (Mouse).